Reading from the N-terminus, the 156-residue chain is Small ribosomal subunit protein uS7 (156 aa).

Belongs to the universal ribosomal protein uS7 family. As to quaternary structure, part of the 30S ribosomal subunit. Contacts proteins S9 and S11.

One of the primary rRNA binding proteins, it binds directly to 16S rRNA where it nucleates assembly of the head domain of the 30S subunit. Is located at the subunit interface close to the decoding center, probably blocks exit of the E-site tRNA. The chain is Small ribosomal subunit protein uS7 from Burkholderia ambifaria (strain MC40-6).